A 406-amino-acid chain; its full sequence is Cysteine desulfurase (406 aa).

K226 is subject to N6-(pyridoxal phosphate)lysine. C364 serves as the catalytic Cysteine persulfide intermediate.

The protein belongs to the class-V pyridoxal-phosphate-dependent aminotransferase family. Csd subfamily. Homodimer. Interacts with SufE and the SufBCD complex composed of SufB, SufC and SufD. The interaction with SufE is required to mediate the direct transfer of the sulfur atom from the S-sulfanylcysteine. It depends on pyridoxal 5'-phosphate as a cofactor.

It is found in the cytoplasm. It carries out the reaction (sulfur carrier)-H + L-cysteine = (sulfur carrier)-SH + L-alanine. The enzyme catalyses L-selenocysteine + AH2 = hydrogenselenide + L-alanine + A + H(+). It functions in the pathway cofactor biosynthesis; iron-sulfur cluster biosynthesis. Functionally, cysteine desulfurases mobilize the sulfur from L-cysteine to yield L-alanine, an essential step in sulfur metabolism for biosynthesis of a variety of sulfur-containing biomolecules. Component of the suf operon, which is activated and required under specific conditions such as oxidative stress and iron limitation. Acts as a potent selenocysteine lyase in vitro, that mobilizes selenium from L-selenocysteine. Selenocysteine lyase activity is however unsure in vivo. In Escherichia coli O45:K1 (strain S88 / ExPEC), this protein is Cysteine desulfurase.